Consider the following 911-residue polypeptide: DNA mismatch repair protein MutS (911 aa).

660 to 667 (GPNMAGKS) contributes to the ATP binding site.

The protein belongs to the DNA mismatch repair MutS family.

Its function is as follows. This protein is involved in the repair of mismatches in DNA. It is possible that it carries out the mismatch recognition step. This protein has a weak ATPase activity. The protein is DNA mismatch repair protein MutS of Rhodopseudomonas palustris (strain HaA2).